The following is a 500-amino-acid chain: Probable malate:quinone oxidoreductase (500 aa).

Belongs to the MQO family. The cofactor is FAD.

It carries out the reaction (S)-malate + a quinone = a quinol + oxaloacetate. It participates in carbohydrate metabolism; tricarboxylic acid cycle; oxaloacetate from (S)-malate (quinone route): step 1/1. This Bacillus cereus (strain ATCC 10987 / NRS 248) protein is Probable malate:quinone oxidoreductase.